The following is a 179-amino-acid chain: Acireductone dioxygenase (179 aa).

Residues His97, His99, Glu103, and His141 each contribute to the Fe(2+) site. 4 residues coordinate Ni(2+): His97, His99, Glu103, and His141.

This sequence belongs to the acireductone dioxygenase (ARD) family. As to quaternary structure, monomer. The cofactor is Fe(2+). Ni(2+) is required as a cofactor.

The catalysed reaction is 1,2-dihydroxy-5-(methylsulfanyl)pent-1-en-3-one + O2 = 3-(methylsulfanyl)propanoate + CO + formate + 2 H(+). The enzyme catalyses 1,2-dihydroxy-5-(methylsulfanyl)pent-1-en-3-one + O2 = 4-methylsulfanyl-2-oxobutanoate + formate + 2 H(+). It functions in the pathway amino-acid biosynthesis; L-methionine biosynthesis via salvage pathway; L-methionine from S-methyl-5-thio-alpha-D-ribose 1-phosphate: step 5/6. Catalyzes 2 different reactions between oxygen and the acireductone 1,2-dihydroxy-3-keto-5-methylthiopentene (DHK-MTPene) depending upon the metal bound in the active site. Fe-containing acireductone dioxygenase (Fe-ARD) produces formate and 2-keto-4-methylthiobutyrate (KMTB), the alpha-ketoacid precursor of methionine in the methionine recycle pathway. Ni-containing acireductone dioxygenase (Ni-ARD) produces methylthiopropionate, carbon monoxide and formate, and does not lie on the methionine recycle pathway. In Gluconacetobacter diazotrophicus (strain ATCC 49037 / DSM 5601 / CCUG 37298 / CIP 103539 / LMG 7603 / PAl5), this protein is Acireductone dioxygenase.